Reading from the N-terminus, the 208-residue chain is Small ribosomal subunit protein uS4 (208 aa).

An S4 RNA-binding domain is found at 98–159; it reads RRLDNVVYRL…KSRNVAAISE (62 aa).

It belongs to the universal ribosomal protein uS4 family. As to quaternary structure, part of the 30S ribosomal subunit. Contacts protein S5. The interaction surface between S4 and S5 is involved in control of translational fidelity.

Its function is as follows. One of the primary rRNA binding proteins, it binds directly to 16S rRNA where it nucleates assembly of the body of the 30S subunit. In terms of biological role, with S5 and S12 plays an important role in translational accuracy. This chain is Small ribosomal subunit protein uS4, found in Trichlorobacter lovleyi (strain ATCC BAA-1151 / DSM 17278 / SZ) (Geobacter lovleyi).